Consider the following 203-residue polypeptide: uncharacterized protein (203 aa).

The disordered stretch occupies residues 174–203; sequence LASSKNPRARSPGLDPLGSSETLWSHRGGH.

This is an uncharacterized protein from Homo sapiens (Human).